The primary structure comprises 130 residues: Small ribosomal subunit protein uS11c (130 aa).

Belongs to the universal ribosomal protein uS11 family. As to quaternary structure, part of the 30S ribosomal subunit.

It localises to the plastid. The protein resides in the chloroplast. The chain is Small ribosomal subunit protein uS11c from Anthoceros angustus (Hornwort).